Consider the following 291-residue polypeptide: MRRYEDKHIPVMPKEVIEHLIWKKDGIYVDCTVGEGGHTLLLASISPDIFVIGLDIDSEVLNIAEKNLSSFTNVKLFKSSYVDLPVVLKALNIEKVSGILIDLGISTYQLKAEGRGFTFNRDEPLDMRMNLEQKKTAYDVVNFYSEKELADIIFKYGEERFSRRIARSIVNSRPINSTLELVEAIRKALPPQEIRKRKRHFATKTFQAIRIEVNGELSNIENFLNNVPDLLEIGGRLAVISFHSLEDRLVKHFIKNSNKLRQIVGPIIPSKEEIDENPRARSAKLRIAERI.

S-adenosyl-L-methionine contacts are provided by residues 36 to 38 (GGH), D55, A90, D102, and Q109.

Belongs to the methyltransferase superfamily. RsmH family.

It is found in the cytoplasm. It catalyses the reaction cytidine(1402) in 16S rRNA + S-adenosyl-L-methionine = N(4)-methylcytidine(1402) in 16S rRNA + S-adenosyl-L-homocysteine + H(+). Specifically methylates the N4 position of cytidine in position 1402 (C1402) of 16S rRNA. The protein is Ribosomal RNA small subunit methyltransferase H of Thermosipho africanus (strain TCF52B).